The sequence spans 152 residues: Deoxyuridine 5'-triphosphate nucleotidohydrolase (152 aa).

Substrate contacts are provided by residues R71–G73, N84, L88–D90, and M98.

This sequence belongs to the dUTPase family. As to quaternary structure, homotrimer. Mg(2+) is required as a cofactor.

The enzyme catalyses dUTP + H2O = dUMP + diphosphate + H(+). It functions in the pathway pyrimidine metabolism; dUMP biosynthesis; dUMP from dCTP (dUTP route): step 2/2. In terms of biological role, this enzyme is involved in nucleotide metabolism: it produces dUMP, the immediate precursor of thymidine nucleotides and it decreases the intracellular concentration of dUTP so that uracil cannot be incorporated into DNA. The polypeptide is Deoxyuridine 5'-triphosphate nucleotidohydrolase (Escherichia coli O157:H7).